A 441-amino-acid chain; its full sequence is Ribosomal protein uS12 methylthiotransferase RimO (441 aa).

The MTTase N-terminal domain occupies 6–116 (PKVGFVSLGC…VMTAVHANLP (111 aa)). The [4Fe-4S] cluster site is built by Cys15, Cys51, Cys80, Cys147, Cys151, and Cys154. A Radical SAM core domain is found at 133–370 (LTPQHYAYLK…MEVQESISAE (238 aa)). The TRAM domain maps to 373 to 439 (RRKIGRIETV…GHDLWAAPPA (67 aa)).

This sequence belongs to the methylthiotransferase family. RimO subfamily. It depends on [4Fe-4S] cluster as a cofactor.

The protein resides in the cytoplasm. It catalyses the reaction L-aspartate(89)-[ribosomal protein uS12]-hydrogen + (sulfur carrier)-SH + AH2 + 2 S-adenosyl-L-methionine = 3-methylsulfanyl-L-aspartate(89)-[ribosomal protein uS12]-hydrogen + (sulfur carrier)-H + 5'-deoxyadenosine + L-methionine + A + S-adenosyl-L-homocysteine + 2 H(+). Catalyzes the methylthiolation of an aspartic acid residue of ribosomal protein uS12. The polypeptide is Ribosomal protein uS12 methylthiotransferase RimO (Methylobacillus flagellatus (strain ATCC 51484 / DSM 6875 / VKM B-1610 / KT)).